Here is a 464-residue protein sequence, read N- to C-terminus: Argininosuccinate lyase (464 aa).

Belongs to the lyase 1 family. Argininosuccinate lyase subfamily.

It is found in the cytoplasm. The catalysed reaction is 2-(N(omega)-L-arginino)succinate = fumarate + L-arginine. Its pathway is amino-acid biosynthesis; L-arginine biosynthesis; L-arginine from L-ornithine and carbamoyl phosphate: step 3/3. The polypeptide is Argininosuccinate lyase (Moorella thermoacetica (strain ATCC 39073 / JCM 9320)).